A 128-amino-acid polypeptide reads, in one-letter code: MAGRATIPARNSALIAMIADEDTVVGFLMAGVGNVDIRRKTNYLIVDSKTTVRQIEDAFKEFSARDDIAIILLSQYIANMIRFLVDSYNKPVPAILEIPSKDHPYDPAHDSVLSRVKYLFSAESVSQR.

The protein belongs to the V-ATPase F subunit family. In terms of assembly, V-ATPase is a heteromultimeric enzyme composed of a peripheral catalytic V1 complex (components A to H) attached to an integral membrane V0 proton pore complex (components: a, c, c'', d and e).

Its subcellular location is the vacuole membrane. Its function is as follows. Subunit of the peripheral V1 complex of vacuolar ATPase essential for assembly or catalytic function. V-ATPase is responsible for acidifying a variety of intracellular compartments in eukaryotic cells. The chain is V-type proton ATPase subunit F (VHA-F) from Arabidopsis thaliana (Mouse-ear cress).